The chain runs to 142 residues: Translation initiation factor 2 subunit beta (142 aa).

It belongs to the eIF-2-beta/eIF-5 family. Heterotrimer composed of an alpha, a beta and a gamma chain.

Functionally, eIF-2 functions in the early steps of protein synthesis by forming a ternary complex with GTP and initiator tRNA. In Methanosphaera stadtmanae (strain ATCC 43021 / DSM 3091 / JCM 11832 / MCB-3), this protein is Translation initiation factor 2 subunit beta.